The following is a 467-amino-acid chain: MKNFNRRAFLKAAGATTAGLVTSGLILPASAQPQKMPPKPSNGKSVMGLISPKLSTVRVGFIGVGQRGYGHVKHFCHLEGVEIKAICDTDPAVLDRAIDFVVEQGLAKPNAYTGSEHTYRDMLQRDDIDIAIISTPWQWHAPMAIDTMENDKHAFVEVPLAMSVEECWQIVDTAERTQKNCMMMENVNYGRDELMVLNMVRQGVFGELIHGEAAYIHELRWQMKELESKTGSWRTHWHTKRNGNLYPTHGLGPVSQYMNINRGDRFDYLTSMSSPALGRALYAKREFPADHERNQLNYINGDMSTSLIKTVKGRTIMVQHDTTTPRPYSRHNLIQGTNGVFAGFPNRIALEQSPFERDEKGGESFHRWDMDMTRWYDKYDHPLWQQMGKEAERNGGHGGMDFLMLWRMVYCLRNAEPLDQDVYDGAAWSVVNILSEESVNNRSNSVTFPDFTRGAWKTGKPLGIVGA.

Positions 1–31 (MKNFNRRAFLKAAGATTAGLVTSGLILPASA) form a signal peptide, tat-type signal. NAD(+)-binding positions include 66–67 (QR), aspartate 88, 137–140 (WQWH), 157–158 (EV), and asparagine 186. Substrate-binding positions include tyrosine 215, arginine 234, 246 to 249 (YPTH), and tyrosine 328. An NAD(+)-binding site is contributed by tyrosine 246.

It belongs to the Gfo/Idh/MocA family. Glycosyl hydrolase 109 subfamily. NAD(+) serves as cofactor. Post-translationally, predicted to be exported by the Tat system. The position of the signal peptide cleavage has not been experimentally proven.

In terms of biological role, glycosidase. The sequence is that of Glycosyl hydrolase family 109 protein from Shewanella woodyi (strain ATCC 51908 / MS32).